The sequence spans 1345 residues: Vascular endothelial growth factor receptor 2 (1345 aa).

The first 19 residues, 1 to 19 (MESKALLAVALWFCVETRA), serve as a signal peptide directing secretion. The Extracellular segment spans residues 20-762 (ASVGLPGDFL…EGAQEKTNLE (743 aa)). N46, N98, N145, N160, and N247 each carry an N-linked (GlcNAc...) asparagine glycan. Ig-like C2-type domains lie at 46 to 111 (NTTL…RDVD), 143 to 209 (NKNK…INDE), 226 to 325 (YDVI…TFVR), 330 to 416 (PFIA…HMVS), 423 to 542 (PQIG…RVIS), 549 to 656 (PEIT…LVKQ), and 665 to 751 (PMIT…TLFI). A disulfide bond links C53 and C105. A disulfide bond links C152 and C202. An intrachain disulfide couples C248 to C309. Residues N320, N376, N397, N509, N521, N578, N611, N617, N629, N673, N702, and N719 are each glycosylated (N-linked (GlcNAc...) asparagine). Cystine bridges form between C447-C528 and C569-C640. C686 and C735 are disulfide-bonded. A helical membrane pass occupies residues 763–783 (VIILVGTAVIAMFFWLLLVIV). Residues 784–1345 (LRTVKRANEG…SGTTLRSPPV (562 aa)) are Cytoplasmic-facing. Residue Y799 is modified to Phosphotyrosine. Residues 832–1160 (LKLGKPLGRG…FSELVEHLGN (329 aa)) form the Protein kinase domain. ATP contacts are provided by residues 838 to 846 (LGRGAFGQV) and K866. Y949 carries the post-translational modification Phosphotyrosine; by autocatalysis. Phosphoserine is present on residues S980 and S982. Y994 carries the phosphotyrosine; by autocatalysis modification. C1022 and C1043 form a disulfide bridge. The active-site Proton acceptor is the D1026. Phosphotyrosine; by autocatalysis is present on residues Y1052, Y1057, Y1173, and Y1212. Phosphoserine occurs at positions 1229 and 1233. At T1236 the chain carries Phosphothreonine. The disordered stretch occupies residues 1272 to 1316 (DRNKLSPSFGGMMPSKSRESVASEGSNQTSGYQSGYHSDDTDTTV). The span at 1294–1307 (SEGSNQTSGYQSGY) shows a compositional bias: polar residues. A phosphotyrosine; by autocatalysis mark is found at Y1303, Y1307, and Y1317.

It belongs to the protein kinase superfamily. Tyr protein kinase family. CSF-1/PDGF receptor subfamily. Homodimer in the presence of bound dimeric VEGFA, VEGFC or VEGFD ligands; monomeric in the absence of bound ligands. Can also form heterodimers with FLT1/VEGFR1 and KDR/VEGFR2. Interacts (tyrosine phosphorylated) with LFYN, NCK1, PLCG1. Interacts (tyrosine-phosphorylated active form preferentially) with DAB2IP (via C2 domain and active form preferentially); the interaction occurs at the late phase of VEGFA response and inhibits KDR/VEGFR2 activity. Interacts with SHBSH2D2A/TSAD, GRB2, MYOF, CBL and PDCD6. Interacts (via C-terminus domain) with ERN1 (via kinase domain); the interaction is facilitated in a XBP1 isoform 1- and vascular endothelial growth factor (VEGF)-dependent manner in endothelial cells. Interacts (via juxtamembrane region) with chaperone PDCL3 (via thioredoxin fold region); the interaction leads to increased KDR/VEGFR2 abundance through inhibition of its ubiquitination and degradation. Interacts (tyrosine phosphorylated) with CCDC88A/GIV (via SH2-like region); binding requires autophosphorylation of the KDR/VEGFR2 C-terminal region. Interacts with isoform 2 of BSG. Interacts with SLC31A1; this interaction is induced upon VEGFA stimulation leading to SLC31A1 and KDR subsequent co-internalization to early endosomes, thereby activating KDR downstream signaling in endothelial cells. N-glycosylated. In terms of processing, ubiquitinated. Tyrosine phosphorylation of the receptor promotes its poly-ubiquitination, leading to its degradation via the proteasome or lysosomal proteases. Post-translationally, autophosphorylated on tyrosine residues upon ligand binding. Autophosphorylation occurs in trans, i.e. one subunit of the dimeric receptor phosphorylates tyrosine residues on the other subunit. Phosphorylation at Tyr-949 is important for interaction with SH2D2A/TSAD and VEGFA-mediated reorganization of the actin cytoskeleton. Phosphorylation at Tyr-1173 is important for interaction with PLCG1 and SHB. Phosphorylation at Tyr-1212 is important for interaction with NCK1 and FYN. Dephosphorylated by PTPRJ at Tyr-799, Tyr-949, Tyr-994, Tyr-1052, Tyr-1057, Tyr-1173 and Tyr-1212. The inhibitory disulfide bond between Cys-1022 and Cys-1043 may serve as a specific molecular switch for H(2)S-induced modification that regulates KDR/VEGFR2 function. Expressed in endothelial cells (at protein level). Detected in embryonic endothelial cells, as well as hematopoietic stem and progenitor cells. Detected in vascular endothelium. Expressed at high levels in adult heart, lung, kidney, brain and skeletal muscle, but is also expressed at lower levels in most other adult tissues.

The protein localises to the cell junction. Its subcellular location is the endoplasmic reticulum. It is found in the cell membrane. The protein resides in the cytoplasm. It localises to the nucleus. The protein localises to the cytoplasmic vesicle. Its subcellular location is the early endosome. It is found in the secreted. The enzyme catalyses L-tyrosyl-[protein] + ATP = O-phospho-L-tyrosyl-[protein] + ADP + H(+). Present in an inactive conformation in the absence of bound ligand. Binding of VEGFA, VEGFC or VEGFD leads to dimerization and activation by autophosphorylation on tyrosine residues. May be regulated by hydrogen sulfide (H(2)S) levels via a sensitive intracellular disulfide bond. Functionally, tyrosine-protein kinase that acts as a cell-surface receptor for VEGFA, VEGFC and VEGFD. Plays an essential role in the regulation of angiogenesis, vascular development, vascular permeability, and embryonic hematopoiesis. Promotes proliferation, survival, migration and differentiation of endothelial cells. Promotes reorganization of the actin cytoskeleton. Isoforms lacking a transmembrane domain, such as isoform 2, may function as decoy receptors for VEGFA, VEGFC and/or VEGFD. Isoform 2 plays an important role as a negative regulator of VEGFA- and VEGFC-mediated lymphangiogenesis by limiting the amount of free VEGFA and/or VEGFC and by preventing their binding to FLT4. Modulates FLT1 and FLT4 signaling by forming heterodimers. Binding of vascular growth factors to isoform 1 leads to the activation of several signaling cascades. Activation of PLCG1 leads to the production of the cellular signaling molecules diacylglycerol and inositol 1,4,5-trisphosphate and the activation of protein kinase C. Mediates activation of MAPK1/ERK2, MAPK3/ERK1 and the MAP kinase signaling pathway, as well as of the AKT1 signaling pathway. Mediates phosphorylation of PIK3R1, the regulatory subunit of phosphatidylinositol 3-kinase, reorganization of the actin cytoskeleton and activation of PTK2/FAK1. Required for VEGFA-mediated induction of NOS2 and NOS3, leading to the production of the signaling molecule nitric oxide (NO) by endothelial cells. Phosphorylates PLCG1. Promotes phosphorylation of FYN, NCK1, NOS3, PIK3R1, PTK2/FAK1 and SRC. The sequence is that of Vascular endothelial growth factor receptor 2 from Mus musculus (Mouse).